Here is an 810-residue protein sequence, read N- to C-terminus: S-adenosyl-L-methionine-dependent tRNA 4-demethylwyosine synthase (810 aa).

Disordered regions lie at residues 86-116 (NGGG…KGGC) and 156-176 (RSST…VGKK). Low complexity predominate over residues 104–116 (GCCSSKGGKKGGC). The span at 159 to 172 (TPKVFSKNSSSNSR) shows a compositional bias: polar residues. Residues 205–360 (IYVLYSSLQG…KIDEWTSLLA (156 aa)) enclose the Flavodoxin-like domain. Residues 211–215 (SLQGA) and 304–337 (VLGL…RRIF) each bind FMN. Acidic residues predominate over residues 374–397 (DENADSEEDEEEGNGSDELGDVED). Residues 374-407 (DENADSEEDEEEGNGSDELGDVEDIGGKGSNGKF) form a disordered region. The Radical SAM core domain occupies 463-713 (FNIASSRCME…ELQRRGLHYD (251 aa)). [4Fe-4S] cluster contacts are provided by C479, C483, and C486. K496 is covalently cross-linked (Glycyl lysine isopeptide (Lys-Gly) (interchain with G-Cter in ubiquitin)). Residues 782-810 (RVYRKDKKKQNKENQETTTRETPLPPIPA) are disordered.

It belongs to the TYW1 family. [4Fe-4S] cluster serves as cofactor.

Its subcellular location is the endoplasmic reticulum. The catalysed reaction is N(1)-methylguanosine(37) in tRNA(Phe) + pyruvate + S-adenosyl-L-methionine = 4-demethylwyosine(37) in tRNA(Phe) + 5'-deoxyadenosine + L-methionine + CO2 + H2O. The protein operates within tRNA modification; wybutosine-tRNA(Phe) biosynthesis. Component of the wybutosine biosynthesis pathway. Wybutosine is a hyper modified guanosine with a tricyclic base found at the 3'-position adjacent to the anticodon of eukaryotic phenylalanine tRNA. Catalyzes the condensation of N-methylguanine with 2 carbon atoms from pyruvate to form the tricyclic 4-demethylwyosine, an intermediate in wybutosine biosynthesis. The chain is S-adenosyl-L-methionine-dependent tRNA 4-demethylwyosine synthase (TYW1) from Saccharomyces cerevisiae (strain ATCC 204508 / S288c) (Baker's yeast).